The following is a 103-amino-acid chain: Matrix Gla protein (103 aa).

Positions Met-1 to Cys-19 are cleaved as a signal peptide. 4-carboxyglutamate is present on Glu-21. Residues Ser-22, Ser-25, and Ser-28 each carry the phosphoserine modification. A Gla domain is found at Arg-51–Arg-97. 4-carboxyglutamate is present on residues Glu-56, Glu-60, Glu-67, and Glu-71. An intrachain disulfide couples Cys-73 to Cys-79.

Belongs to the osteocalcin/matrix Gla protein family. Post-translationally, requires vitamin K-dependent gamma-carboxylation for its function.

Its subcellular location is the secreted. Its function is as follows. Associates with the organic matrix of bone and cartilage. Thought to act as an inhibitor of bone formation. The polypeptide is Matrix Gla protein (MGP) (Sus scrofa (Pig)).